We begin with the raw amino-acid sequence, 129 residues long: Snaclec rhodocetin subunit beta (129 aa).

A C-type lectin domain is found at 3–125 (RCPTTWSASK…EEKNAFLCKF (123 aa)). Cystine bridges form between Cys4/Cys15, Cys32/Cys123, and Cys98/Cys115.

Heterotetramer of subunit alpha, beta, gamma and delta; only the gamma and the delta subunits are disulfide-linked. Alpha-beta heterodimer and gamma-delta heterodimer associate orthogonally, giving a cruciform conformation. This heterotetramer may covalently dimerizes thanks to the gamma subunit. As to expression, expressed by the venom gland.

It localises to the secreted. In terms of biological role, potent inhibitor of collagen-induced platelet aggregation. It acts by binding to the integrin alpha2A domain and blocks collagen binding to integrin alpha-2/beta-1 (ITGA2/ITGB1). The gamma/delta subunits mainly contribute to this activity. This chain is Snaclec rhodocetin subunit beta, found in Calloselasma rhodostoma (Malayan pit viper).